Reading from the N-terminus, the 644-residue chain is DNA gyrase subunit B (644 aa).

The region spanning 429 to 543 (CEIFLVEGDS…AGYVYIAQPP (115 aa)) is the Toprim domain. Mg(2+)-binding residues include Glu435, Asp508, and Asp510.

Belongs to the type II topoisomerase GyrB family. In terms of assembly, heterotetramer, composed of two GyrA and two GyrB chains. In the heterotetramer, GyrA contains the active site tyrosine that forms a transient covalent intermediate with DNA, while GyrB binds cofactors and catalyzes ATP hydrolysis. Requires Mg(2+) as cofactor. Mn(2+) is required as a cofactor. Ca(2+) serves as cofactor.

The protein localises to the cytoplasm. The enzyme catalyses ATP-dependent breakage, passage and rejoining of double-stranded DNA.. In terms of biological role, a type II topoisomerase that negatively supercoils closed circular double-stranded (ds) DNA in an ATP-dependent manner to modulate DNA topology and maintain chromosomes in an underwound state. Negative supercoiling favors strand separation, and DNA replication, transcription, recombination and repair, all of which involve strand separation. Also able to catalyze the interconversion of other topological isomers of dsDNA rings, including catenanes and knotted rings. Type II topoisomerases break and join 2 DNA strands simultaneously in an ATP-dependent manner. The chain is DNA gyrase subunit B from Staphylococcus aureus (strain Mu50 / ATCC 700699).